The chain runs to 117 residues: cAMP-regulated phosphoprotein 19-B (117 aa).

Residues 1-37 (MSRDNQEIKAPEESSAEEQKEMDDKVTSPEKAEEIKL) are compositionally biased toward basic and acidic residues. Residues 1–54 (MSRDNQEIKAPEESSAEEQKEMDDKVTSPEKAEEIKLKSRYPNIGPKPGGSDFL) are disordered. Ser-28 carries the phosphoserine; by CDK2 modification. The residue at position 67 (Ser-67) is a Phosphoserine; by GWL. Positions 77-117 (MKNKQLPTAAPDKTEVTGDHIPTPQDLPQRKPSLVASKLAG) are disordered. Thr-99 carries the phosphothreonine; by CDK2 modification. Phosphoserine; by PKA is present on Ser-109.

It belongs to the endosulfine family. In terms of assembly, interacts (when phosphorylated at Ser-67) with ppp2r2d. Post-translationally, phosphorylation at Ser-67 by gwl during mitosis is essential for interaction with ppp2r2d (PR55-delta) and subsequent inactivation of PP2A.

It localises to the cytoplasm. Protein phosphatase inhibitor that specifically inhibits protein phosphatase 2A (PP2A) during mitosis. When phosphorylated at Ser-67 during mitosis, specifically interacts with ppp2r2d (PR55-delta) and inhibits its activity, leading to inactivation of PP2A, an essential condition to keep cyclin-B1-CDK1 activity high during M phase. In Xenopus laevis (African clawed frog), this protein is cAMP-regulated phosphoprotein 19-B (arpp19-b).